A 44-amino-acid chain; its full sequence is Endochitinase 1 (44 aa).

Belongs to the glycosyl hydrolase 19 family. Chitinase class I subfamily.

It carries out the reaction Random endo-hydrolysis of N-acetyl-beta-D-glucosaminide (1-&gt;4)-beta-linkages in chitin and chitodextrins.. Defense against chitin-containing fungal pathogens. The chain is Endochitinase 1 from Capsicum chinense (Scotch bonnet).